A 66-amino-acid polypeptide reads, in one-letter code: Large ribosomal subunit protein bL35 (66 aa).

Composition is skewed to basic residues over residues 1–16 (MPKF…RFKR) and 23–45 (KRSH…RQLR). A disordered region spans residues 1–66 (MPKFKTHRAS…RIRQMLSGLK (66 aa)).

It belongs to the bacterial ribosomal protein bL35 family.

This chain is Large ribosomal subunit protein bL35, found in Latilactobacillus sakei subsp. sakei (strain 23K) (Lactobacillus sakei subsp. sakei).